A 118-amino-acid chain; its full sequence is Large ribosomal subunit protein bL19 (118 aa).

It belongs to the bacterial ribosomal protein bL19 family.

Its function is as follows. This protein is located at the 30S-50S ribosomal subunit interface and may play a role in the structure and function of the aminoacyl-tRNA binding site. In Teredinibacter turnerae (strain ATCC 39867 / T7901), this protein is Large ribosomal subunit protein bL19.